We begin with the raw amino-acid sequence, 495 residues long: Polybrominated aromatic compounds synthase (495 aa).

C437 is a binding site for heme.

The protein belongs to the cytochrome P450 family. It depends on heme as a cofactor.

In terms of biological role, cytochrome P450 protein involved in the biosynthesis of polybrominated aromatic organic compounds. In the presence of ferredoxin, ferredoxin reductase and NADH, catalyzes the coupling of bromophenols and bromopyrroles, forming various polybrominated biphenyls and hydroxylated polybrominated diphenyl ethers (OH-BDE). Can also mediate the heterocoupling of 3,5-dibromocatechol, forming six different compounds, including polybrominated dibenzo-p-dioxins, which are among the most toxic molecules known to man. This is Polybrominated aromatic compounds synthase from Marinomonas mediterranea (strain ATCC 700492 / JCM 21426 / NBRC 103028 / MMB-1).